The primary structure comprises 353 residues: RNA 3'-terminal phosphate cyclase (353 aa).

Residues Gln-103 and 297-301 contribute to the ATP site; that span reads HLADQ. The Tele-AMP-histidine intermediate role is filled by His-322.

Belongs to the RNA 3'-terminal cyclase family. Type 1 subfamily.

It is found in the cytoplasm. It catalyses the reaction a 3'-end 3'-phospho-ribonucleotide-RNA + ATP = a 3'-end 2',3'-cyclophospho-ribonucleotide-RNA + AMP + diphosphate. Its function is as follows. Catalyzes the conversion of 3'-phosphate to a 2',3'-cyclic phosphodiester at the end of RNA. The mechanism of action of the enzyme occurs in 3 steps: (A) adenylation of the enzyme by ATP; (B) transfer of adenylate to an RNA-N3'P to produce RNA-N3'PP5'A; (C) and attack of the adjacent 2'-hydroxyl on the 3'-phosphorus in the diester linkage to produce the cyclic end product. The biological role of this enzyme is unknown but it is likely to function in some aspects of cellular RNA processing. The chain is RNA 3'-terminal phosphate cyclase from Salmonella heidelberg (strain SL476).